The sequence spans 414 residues: Serine hydroxymethyltransferase (414 aa).

(6S)-5,6,7,8-tetrahydrofolate contacts are provided by residues leucine 121 and 125–127 (GHL). The residue at position 229 (lysine 229) is an N6-(pyridoxal phosphate)lysine.

Belongs to the SHMT family. Homodimer. Requires pyridoxal 5'-phosphate as cofactor.

It localises to the cytoplasm. It catalyses the reaction (6R)-5,10-methylene-5,6,7,8-tetrahydrofolate + glycine + H2O = (6S)-5,6,7,8-tetrahydrofolate + L-serine. Its pathway is one-carbon metabolism; tetrahydrofolate interconversion. It functions in the pathway amino-acid biosynthesis; glycine biosynthesis; glycine from L-serine: step 1/1. Functionally, catalyzes the reversible interconversion of serine and glycine with tetrahydrofolate (THF) serving as the one-carbon carrier. This reaction serves as the major source of one-carbon groups required for the biosynthesis of purines, thymidylate, methionine, and other important biomolecules. Also exhibits THF-independent aldolase activity toward beta-hydroxyamino acids, producing glycine and aldehydes, via a retro-aldol mechanism. The chain is Serine hydroxymethyltransferase from Variovorax paradoxus (strain S110).